Consider the following 355-residue polypeptide: MEPPAGAAATVKDPDHDPVKTKVSAPAADPKPRTSSQKAGHSLQDWDTIATVGTGTFGRVNLVKEKTGRQYCALKIMSIPDVIRLKQEQHVQNEKAVLKEINHPFLIKLLWTGHDNRFLYMLMEFVPGGELFTYLRNRGRFSSVASVFYATEIVCAIEYLHSKEIVYRDLKPENILLDREGHIKLTDFGFAKKLVDRTWTLCGTPEYLAPEVIQSKGHGRAVDWWALGILIFEMLSGFPPFFDDNPFGIYQKILACKIDFPRQLDFTSKDLIKKLLVVDRTRRLGNMKNGAEDIKRHRWFRGVEWESVPQRKLKPPIVPKLSGDGDISNFETYPESELDKTPSVSDKDLETFKNF.

Met1 carries the N-acetylmethionine modification. Residues 1–42 (MEPPAGAAATVKDPDHDPVKTKVSAPAADPKPRTSSQKAGHS) form a disordered region. The region spanning 46-300 (WDTIATVGTG…AEDIKRHRWF (255 aa)) is the Protein kinase domain. ATP-binding positions include 52–60 (VGTGTFGRV) and Lys75. Asp169 serves as the catalytic Proton acceptor. At Thr200 the chain carries Phosphothreonine. The region spanning 301-355 (RGVEWESVPQRKLKPPIVPKLSGDGDISNFETYPESELDKTPSVSDKDLETFKNF) is the AGC-kinase C-terminal domain. The segment at 316–355 (PIVPKLSGDGDISNFETYPESELDKTPSVSDKDLETFKNF) is disordered. The span at 337-355 (ELDKTPSVSDKDLETFKNF) shows a compositional bias: basic and acidic residues.

It belongs to the protein kinase superfamily. AGC Ser/Thr protein kinase family. cAMP subfamily. Like other cAMP-dependent protein kinases, the inactive holoenzyme is probably composed of 2 PRKX catalytic subunits and a dimer of regulatory subunits. Interacts (cAMP-dependent) specifically with the regulatory subunits PRKAR1A and PRKAR1B. Compared to other cAMP-dependent serine/threonine protein kinases, does not interact with the 2 other PKA regulatory subunits PRKAR2A and PRKAR2B. Interacts with PIN1 (via WW domain). Interacts with cAMP-dependent protein kinase inhibitor/PKI proteins; inhibits PRKX. Interacts with GPKOW. Interacts with SMAD6. Interacts with PKD1; involved in differentiation and controlled morphogenesis of the kidney. Phosphorylated; autophosphorylates in vitro. As to expression, widely expressed.

It is found in the cytoplasm. The protein resides in the nucleus. It catalyses the reaction L-seryl-[protein] + ATP = O-phospho-L-seryl-[protein] + ADP + H(+). The enzyme catalyses L-threonyl-[protein] + ATP = O-phospho-L-threonyl-[protein] + ADP + H(+). With respect to regulation, binding of cAMP to the PRKAR1A or PRKAR1B regulatory subunits induces dissociation of the holoenzyme heterotetramer. The released monomeric PRKX is then active and able to phosphorylate its substrates. Serine/threonine protein kinase regulated by and mediating cAMP signaling in cells. Acts through phosphorylation of downstream targets that may include CREB, SMAD6 and PKD1 and has multiple functions in cellular differentiation and epithelial morphogenesis. Regulates myeloid cell differentiation through SMAD6 phosphorylation. Involved in nephrogenesis by stimulating renal epithelial cell migration and tubulogenesis. Also involved in angiogenesis through stimulation of endothelial cell proliferation, migration and vascular-like structure formation. This is cAMP-dependent protein kinase catalytic subunit PRKX (Prkx) from Mus musculus (Mouse).